The following is a 249-amino-acid chain: Eukaryotic translation initiation factor 3 subunit K (249 aa).

One can recognise a PCI domain in the interval 46–222 (FDCYANLALL…VKVPSNKENE (177 aa)).

It belongs to the eIF-3 subunit K family. In terms of assembly, component of the eukaryotic translation initiation factor 3 (eIF-3) complex.

The protein resides in the cytoplasm. Component of the eukaryotic translation initiation factor 3 (eIF-3) complex, which is involved in protein synthesis of a specialized repertoire of mRNAs and, together with other initiation factors, stimulates binding of mRNA and methionyl-tRNAi to the 40S ribosome. The eIF-3 complex specifically targets and initiates translation of a subset of mRNAs involved in cell proliferation. The polypeptide is Eukaryotic translation initiation factor 3 subunit K (Aspergillus clavatus (strain ATCC 1007 / CBS 513.65 / DSM 816 / NCTC 3887 / NRRL 1 / QM 1276 / 107)).